Consider the following 73-residue polypeptide: UPF0435 protein lmo1707 (73 aa).

The protein belongs to the UPF0435 family.

In Listeria monocytogenes serovar 1/2a (strain ATCC BAA-679 / EGD-e), this protein is UPF0435 protein lmo1707.